Consider the following 198-residue polypeptide: Holliday junction branch migration complex subunit RuvA (198 aa).

Residues methionine 1–histidine 63 form a domain I region. The domain II stretch occupies residues serine 64–proline 142. The segment at proline 143–glutamine 147 is flexible linker. The segment at glutamine 148–glycine 198 is domain III.

The protein belongs to the RuvA family. In terms of assembly, homotetramer. Forms an RuvA(8)-RuvB(12)-Holliday junction (HJ) complex. HJ DNA is sandwiched between 2 RuvA tetramers; dsDNA enters through RuvA and exits via RuvB. An RuvB hexamer assembles on each DNA strand where it exits the tetramer. Each RuvB hexamer is contacted by two RuvA subunits (via domain III) on 2 adjacent RuvB subunits; this complex drives branch migration. In the full resolvosome a probable DNA-RuvA(4)-RuvB(12)-RuvC(2) complex forms which resolves the HJ.

It is found in the cytoplasm. Its function is as follows. The RuvA-RuvB-RuvC complex processes Holliday junction (HJ) DNA during genetic recombination and DNA repair, while the RuvA-RuvB complex plays an important role in the rescue of blocked DNA replication forks via replication fork reversal (RFR). RuvA specifically binds to HJ cruciform DNA, conferring on it an open structure. The RuvB hexamer acts as an ATP-dependent pump, pulling dsDNA into and through the RuvAB complex. HJ branch migration allows RuvC to scan DNA until it finds its consensus sequence, where it cleaves and resolves the cruciform DNA. The sequence is that of Holliday junction branch migration complex subunit RuvA from Streptococcus equi subsp. zooepidemicus (strain H70).